The chain runs to 445 residues: Phosphoglucosamine mutase (445 aa).

The active-site Phosphoserine intermediate is Ser102. Residues Ser102, Asp241, Asp243, and Asp245 each coordinate Mg(2+). Ser102 bears the Phosphoserine mark.

It belongs to the phosphohexose mutase family. Mg(2+) serves as cofactor. Activated by phosphorylation.

It carries out the reaction alpha-D-glucosamine 1-phosphate = D-glucosamine 6-phosphate. In terms of biological role, catalyzes the conversion of glucosamine-6-phosphate to glucosamine-1-phosphate. The polypeptide is Phosphoglucosamine mutase (Novosphingobium aromaticivorans (strain ATCC 700278 / DSM 12444 / CCUG 56034 / CIP 105152 / NBRC 16084 / F199)).